The following is a 296-amino-acid chain: tRNA dimethylallyltransferase (296 aa).

Position 2–9 (2–9 (GPTASGKT)) interacts with ATP. 4–9 (TASGKT) contacts substrate. Interaction with substrate tRNA stretches follow at residues 27-30 (DSAL), 151-155 (QRLSR), and 232-237 (RCVGYR).

The protein belongs to the IPP transferase family. As to quaternary structure, monomer. Requires Mg(2+) as cofactor.

It carries out the reaction adenosine(37) in tRNA + dimethylallyl diphosphate = N(6)-dimethylallyladenosine(37) in tRNA + diphosphate. Its function is as follows. Catalyzes the transfer of a dimethylallyl group onto the adenine at position 37 in tRNAs that read codons beginning with uridine, leading to the formation of N6-(dimethylallyl)adenosine (i(6)A). In Shewanella baltica (strain OS155 / ATCC BAA-1091), this protein is tRNA dimethylallyltransferase.